Consider the following 328-residue polypeptide: Diaminopimelate epimerase (328 aa).

2 residues coordinate substrate: Asn14 and Asn73. Cys82 (proton donor) is an active-site residue. Residues 83–84, Asn170, Asn206, and 224–225 each bind substrate; these read GN and ER. Cys233 acts as the Proton acceptor in catalysis. 234 to 235 serves as a coordination point for substrate; it reads GT.

This sequence belongs to the diaminopimelate epimerase family. In terms of assembly, homodimer.

It is found in the cytoplasm. It catalyses the reaction (2S,6S)-2,6-diaminopimelate = meso-2,6-diaminopimelate. It functions in the pathway amino-acid biosynthesis; L-lysine biosynthesis via DAP pathway; DL-2,6-diaminopimelate from LL-2,6-diaminopimelate: step 1/1. Catalyzes the stereoinversion of LL-2,6-diaminopimelate (L,L-DAP) to meso-diaminopimelate (meso-DAP), a precursor of L-lysine and an essential component of the bacterial peptidoglycan. In Listeria welshimeri serovar 6b (strain ATCC 35897 / DSM 20650 / CCUG 15529 / CIP 8149 / NCTC 11857 / SLCC 5334 / V8), this protein is Diaminopimelate epimerase.